The primary structure comprises 335 residues: UDP-N-acetylenolpyruvoylglucosamine reductase 1 (335 aa).

An FAD-binding PCMH-type domain is found at 36 to 202 (RIGGPAAVFA…LEVELLLKPG (167 aa)). Residue arginine 181 is part of the active site. The active-site Proton donor is the serine 231. The active site involves glutamate 306.

This sequence belongs to the MurB family. FAD is required as a cofactor.

It is found in the cytoplasm. It carries out the reaction UDP-N-acetyl-alpha-D-muramate + NADP(+) = UDP-N-acetyl-3-O-(1-carboxyvinyl)-alpha-D-glucosamine + NADPH + H(+). The protein operates within cell wall biogenesis; peptidoglycan biosynthesis. Cell wall formation. This is UDP-N-acetylenolpyruvoylglucosamine reductase 1 (murB1) from Corynebacterium glutamicum (strain ATCC 13032 / DSM 20300 / JCM 1318 / BCRC 11384 / CCUG 27702 / LMG 3730 / NBRC 12168 / NCIMB 10025 / NRRL B-2784 / 534).